The chain runs to 556 residues: Glucose-6-phosphate isomerase (556 aa).

Residue Glu360 is the Proton donor of the active site. Catalysis depends on residues His391 and Lys519.

The protein belongs to the GPI family.

The protein resides in the cytoplasm. The catalysed reaction is alpha-D-glucose 6-phosphate = beta-D-fructose 6-phosphate. Its pathway is carbohydrate biosynthesis; gluconeogenesis. The protein operates within carbohydrate degradation; glycolysis; D-glyceraldehyde 3-phosphate and glycerone phosphate from D-glucose: step 2/4. Its function is as follows. Catalyzes the reversible isomerization of glucose-6-phosphate to fructose-6-phosphate. The chain is Glucose-6-phosphate isomerase from Acinetobacter baumannii (strain SDF).